The primary structure comprises 329 residues: Sorting assembly machinery 35 kDa subunit (329 aa).

Component of the mitochondrial outer membrane sorting assembly machinery (SAM or TOB) complex, which at least consists of SAM35, SAM37 and SAM50.

It localises to the mitochondrion outer membrane. Functionally, essential component of the mitochondrial outer membrane sorting assembly machinery (SAM or TOB) complex, which is required for the sorting of proteins with complicated topology, such as beta-barrel proteins, to the mitochondrial outer membrane after import by the TOM complex. The chain is Sorting assembly machinery 35 kDa subunit (SAM35) from Saccharomyces cerevisiae (strain ATCC 204508 / S288c) (Baker's yeast).